The chain runs to 715 residues: Putative pentatricopeptide repeat-containing protein At3g23330 (715 aa).

13 PPR repeats span residues 38 to 68, 69 to 103, 104 to 138, 139 to 172, 206 to 240, 241 to 275, 276 to 306, 307 to 341, 342 to 376, 377 to 407, 408 to 442, 443 to 473, and 479 to 509; these read SHTS…LKSP, PVLA…GRCP, DHNV…GMDC, DLYT…MPQR, DVVS…DLKP, DSFT…GIDS, DVYI…LYCR, DGIS…KVKP, GAVA…GFGS, NIFI…MNVL, DEVS…GVKP, NQVA…MTKV, and ELEH…MCVE. Residues 514–589 form a type E motif region; it reads VWSTLLSSCS…KPACSWIEMK (76 aa). The segment at 590-620 is type E(+) motif; it reads NKTHGFVSGDRSHPSMDKINEFLKAVMEQME. Positions 621-715 are type DYW motif; sequence KEGYVADTSG…RGNCSCGDYW (95 aa).

The protein belongs to the PPR family. PCMP-H subfamily.

This chain is Putative pentatricopeptide repeat-containing protein At3g23330 (PCMP-H32), found in Arabidopsis thaliana (Mouse-ear cress).